Here is a 149-residue protein sequence, read N- to C-terminus: Nucleoside deoxyribosyltransferase (149 aa).

Residue Glu90 is the Nucleophile of the active site.

It belongs to the nucleoside deoxyribosyltransferase family.

The catalysed reaction is 2-deoxy-D-ribosyl-base(1) + base(2) = 2-deoxy-D-ribosyl-base(2) + base(1).. The protein operates within nucleotide metabolism; nucleotide salvage pathway. In terms of biological role, catalyzes the cleavage of the glycosidic bond of 2'-deoxyribonucleosides and the transfer of the deoxyribosyl moiety to an acceptor purine or pyrimidine base. The chain is Nucleoside deoxyribosyltransferase (ntd) from Lactobacillus johnsonii (strain CNCM I-12250 / La1 / NCC 533).